Here is a 712-residue protein sequence, read N- to C-terminus: MPKEHKKRGRRDEQKKRKRDADDDATAKRHKKDDVDAQFQPLDAAHQLHHGGVGEDGELTRPGEVQFYGMLDEDEQEFFKNVDDQLDRNEFASPDERAQWLKNVFKEAEGKELKIANSQSCSRVLERLILLSTPGQLKNIFEKFNGHFLNLVQHRFASHCCEALFLQAAPVVTQELANPERLQTPPSSNPDHIFVSMENLFLFTLAELQEHLGFLMTDRFASHVLRVLLVVLSGSPLERQSKSVLQSKRKEKVDVTGAEKGREWLAEKRAVPQSFLEALEKVINNCVSGMEPHYLRSLATHPLGNPTLQLLLKLELSHFGKSRAKDEKSLIHRLLPDDPIAEGTDSAAFINGLVYDPIGSRLLETIIENAPGKLFKAIYGEFFKERMGSLSRNEIAGYVAGKILERLGKDDLEEAMRQIVDQIPSLVERNRTAIIKTLIERCVARGVDTASIKAQLETAYGGSNGFEVIRILKLSEEDGKPGGEHKQQSPEKLHGSLLAQTMMSVEGPLGNLVFDSLANLSPELSVQLARDPPASRTLQAALTSPNASVIFRRKMIQQFYGKVGELALDPSASRVIDAIWNGTAGLAFIRERIAEELAENEGSLRESYVGRAVWRNWRMDLYKRKRNDWVKQSRYTAGNDGFQSFPESDGDASNSQTRAGKHMTAIELARQKHAAAKAAAQGKKDMKKEKTERHGTGSNSSAVGTKGRVVAQ.

Residues 1–40 are disordered; it reads MPKEHKKRGRRDEQKKRKRDADDDATAKRHKKDDVDAQFQ. The span at 10–35 shows a compositional bias: basic and acidic residues; that stretch reads RRDEQKKRKRDADDDATAKRHKKDDV. Pumilio repeat units lie at residues 107–142, 143–178, 207–246, 345–380, 381–421, 519–557, and 558–595; these read EAEG…NIFE, KFNG…ELAN, ELQE…SVLQ, DSAA…AIYG, EFFK…QIVD, NLSP…KMIQ, and QFYG…RIAE. The span at 640–658 shows a compositional bias: polar residues; that stretch reads DGFQSFPESDGDASNSQTR. A disordered region spans residues 640-712; it reads DGFQSFPESD…VGTKGRVVAQ (73 aa). A compositionally biased stretch (basic and acidic residues) spans 682 to 695; that stretch reads GKKDMKKEKTERHG.

This sequence belongs to the NOP9 family.

Its subcellular location is the nucleus. It is found in the nucleolus. In terms of biological role, RNA-binding nucleolar protein required for pre-rRNA processing. Involved in production of 18S rRNA and assembly of small ribosomal subunit. This chain is Nucleolar protein 9 (NOP9), found in Leptosphaeria maculans (strain JN3 / isolate v23.1.3 / race Av1-4-5-6-7-8) (Blackleg fungus).